Here is a 492-residue protein sequence, read N- to C-terminus: Aspartyl/glutamyl-tRNA(Asn/Gln) amidotransferase subunit B (492 aa).

It belongs to the GatB/GatE family. GatB subfamily. As to quaternary structure, heterotrimer of A, B and C subunits.

The catalysed reaction is L-glutamyl-tRNA(Gln) + L-glutamine + ATP + H2O = L-glutaminyl-tRNA(Gln) + L-glutamate + ADP + phosphate + H(+). It catalyses the reaction L-aspartyl-tRNA(Asn) + L-glutamine + ATP + H2O = L-asparaginyl-tRNA(Asn) + L-glutamate + ADP + phosphate + 2 H(+). In terms of biological role, allows the formation of correctly charged Asn-tRNA(Asn) or Gln-tRNA(Gln) through the transamidation of misacylated Asp-tRNA(Asn) or Glu-tRNA(Gln) in organisms which lack either or both of asparaginyl-tRNA or glutaminyl-tRNA synthetases. The reaction takes place in the presence of glutamine and ATP through an activated phospho-Asp-tRNA(Asn) or phospho-Glu-tRNA(Gln). The protein is Aspartyl/glutamyl-tRNA(Asn/Gln) amidotransferase subunit B of Pelagibacter ubique (strain HTCC1062).